The primary structure comprises 486 residues: uncharacterized protein (486 aa).

Belongs to the UbiD family.

This is an uncharacterized protein from Aquifex aeolicus (strain VF5).